We begin with the raw amino-acid sequence, 208 residues long: ATP phosphoribosyltransferase (208 aa).

Belongs to the ATP phosphoribosyltransferase family. Short subfamily. Heteromultimer composed of HisG and HisZ subunits.

It is found in the cytoplasm. It carries out the reaction 1-(5-phospho-beta-D-ribosyl)-ATP + diphosphate = 5-phospho-alpha-D-ribose 1-diphosphate + ATP. Its pathway is amino-acid biosynthesis; L-histidine biosynthesis; L-histidine from 5-phospho-alpha-D-ribose 1-diphosphate: step 1/9. Catalyzes the condensation of ATP and 5-phosphoribose 1-diphosphate to form N'-(5'-phosphoribosyl)-ATP (PR-ATP). Has a crucial role in the pathway because the rate of histidine biosynthesis seems to be controlled primarily by regulation of HisG enzymatic activity. In Hydrogenovibrio crunogenus (strain DSM 25203 / XCL-2) (Thiomicrospira crunogena), this protein is ATP phosphoribosyltransferase.